Consider the following 441-residue polypeptide: tRNA modification GTPase MnmE (441 aa).

3 residues coordinate (6S)-5-formyl-5,6,7,8-tetrahydrofolate: arginine 23, glutamate 81, and lysine 121. A TrmE-type G domain is found at 218–363 (GFRVAIVGPP…LESWIAAFVS (146 aa)). Asparagine 228 serves as a coordination point for K(+). GTP contacts are provided by residues 228-233 (NAGKSS), 247-253 (TDIAGTT), 272-275 (DTAG), and 326-329 (NKAD). Serine 232 is a Mg(2+) binding site. The K(+) site is built by threonine 247, isoleucine 249, and threonine 252. Mg(2+) is bound at residue threonine 253. Lysine 441 lines the (6S)-5-formyl-5,6,7,8-tetrahydrofolate pocket.

The protein belongs to the TRAFAC class TrmE-Era-EngA-EngB-Septin-like GTPase superfamily. TrmE GTPase family. Homodimer. Heterotetramer of two MnmE and two MnmG subunits. K(+) is required as a cofactor.

The protein localises to the cytoplasm. Functionally, exhibits a very high intrinsic GTPase hydrolysis rate. Involved in the addition of a carboxymethylaminomethyl (cmnm) group at the wobble position (U34) of certain tRNAs, forming tRNA-cmnm(5)s(2)U34. The sequence is that of tRNA modification GTPase MnmE from Hyphomonas neptunium (strain ATCC 15444).